Consider the following 1160-residue polypeptide: Pesticidal crystal protein Cry8Ca (1160 aa).

It belongs to the delta endotoxin family.

Functionally, promotes colloidosmotic lysis by binding to the midgut epithelial cells of insects. Active on various scarabaeid beetles such as Anomala cuprea, A.rufocuprea and Popillia japonica. The polypeptide is Pesticidal crystal protein Cry8Ca (cry8Ca) (Bacillus thuringiensis subsp. japonensis).